Here is an 81-residue protein sequence, read N- to C-terminus: Cytochrome b559 subunit alpha (81 aa).

A helical transmembrane segment spans residues 22 to 36; that stretch reads VIHSITIPSLFIAGW. Position 24 (His-24) interacts with heme.

This sequence belongs to the PsbE/PsbF family. Heterodimer of an alpha subunit and a beta subunit. PSII is composed of 1 copy each of membrane proteins PsbA, PsbB, PsbC, PsbD, PsbE, PsbF, PsbH, PsbI, PsbJ, PsbK, PsbL, PsbM, PsbT, PsbX, PsbY, PsbZ, Psb30/Ycf12, at least 3 peripheral proteins of the oxygen-evolving complex and a large number of cofactors. It forms dimeric complexes. Heme b is required as a cofactor.

The protein localises to the plastid. Its subcellular location is the chloroplast thylakoid membrane. Its function is as follows. This b-type cytochrome is tightly associated with the reaction center of photosystem II (PSII). PSII is a light-driven water:plastoquinone oxidoreductase that uses light energy to abstract electrons from H(2)O, generating O(2) and a proton gradient subsequently used for ATP formation. It consists of a core antenna complex that captures photons, and an electron transfer chain that converts photonic excitation into a charge separation. The sequence is that of Cytochrome b559 subunit alpha from Cyanidioschyzon merolae (strain NIES-3377 / 10D) (Unicellular red alga).